Reading from the N-terminus, the 346-residue chain is Oxidoreductase calI (346 aa).

A disordered region spans residues 11 to 33 (VSTPQGRGDGRPTADQVLRDQDP). The segment covering 18 to 32 (GDGRPTADQVLRDQD) has biased composition (basic and acidic residues). NADP(+) is bound by residues L52, K76, D100, and N128. S181 functions as the Proton donor in the catalytic mechanism. 3 residues coordinate NADP(+): Y208, K212, and I241. Y208 serves as the catalytic Proton acceptor. The active-site Lowers pKa of active site Tyr is the K212.

The protein belongs to the short-chain dehydrogenases/reductases (SDR) family.

Its pathway is secondary metabolite biosynthesis. Its function is as follows. Oxidoreductase; part of the gene cluster that mediates the biosynthesis of calbistrin A and related compounds. Calbistrin A is a secondary metabolite with an interesting structure that was recently found to have bioactivity against leukemia cells. It consists of two polyketides linked by an ester bond: a bicyclic decalin containing polyketide and a linear 12 carbon dioic acid structure. The polyketide synthase calA is probably responsible for forming the decalin moiety. Because calA lacks a designated enoylreductase (ER) domain, the required activity is provided by the trans-enoyl reductase calK. Following release from the PKS, calF then probably catalyzes the oxidation and the subsequent Diels Alder cycloisomerization that lead to the formation of the decalin moiety. The decalin polyketide backbone includes two C-methyl groups, at C7 and C11 in backbone, of which the C7 position is probably methylated by the methyltransferase domain of calA. A candidate for adding the methyl group at C11, if not done by CalA, is the cluster methyltransferase calH. Several additional tailoring enzymes within the cluster could be involved in the modification of the decalin polyketide product. Those include the 3 cytochrome P450 monooxygenases CalE, CalG and CalL, of which one might be responsible for the introduction of the extra hydroxyl group attached to the backbone of the decalin moiety, at position C9 in the backbone, that allows for attachment of the linear moiety. One tailoring enzyme activity that is expected to be involved in biosynthesis of calbistrin is an acyltransferase for connecting the two polyketide synthase products, and which could be performed by the cluster acyltransferase calJ. The enzyme responsible for the biosynthesis of the linear moiety, probably a second PKS, has not been identified yet. In Penicillium decumbens, this protein is Oxidoreductase calI.